The primary structure comprises 1390 residues: DNA-directed RNA polymerase subunit beta'' (1390 aa).

C220, C291, C298, and C301 together coordinate Zn(2+).

Belongs to the RNA polymerase beta' chain family. RpoC2 subfamily. In plastids the minimal PEP RNA polymerase catalytic core is composed of four subunits: alpha, beta, beta', and beta''. When a (nuclear-encoded) sigma factor is associated with the core the holoenzyme is formed, which can initiate transcription. It depends on Zn(2+) as a cofactor.

It is found in the plastid. The protein resides in the chloroplast. It catalyses the reaction RNA(n) + a ribonucleoside 5'-triphosphate = RNA(n+1) + diphosphate. Its function is as follows. DNA-dependent RNA polymerase catalyzes the transcription of DNA into RNA using the four ribonucleoside triphosphates as substrates. This Populus alba (White poplar) protein is DNA-directed RNA polymerase subunit beta''.